A 258-amino-acid chain; its full sequence is Enoyl-[acyl-carrier-protein] reductase [NADH] FabI (258 aa).

Residues glycine 13, 19–20 (SI), 67–68 (NV), and leucine 95 each bind NAD(+). Alanine 98 is a substrate binding site. Residues tyrosine 148 and tyrosine 158 each act as proton acceptor in the active site. Residues lysine 165 and 194–198 (IRTLA) each bind NAD(+).

This sequence belongs to the short-chain dehydrogenases/reductases (SDR) family. FabI subfamily. In terms of assembly, homotetramer.

It catalyses the reaction a 2,3-saturated acyl-[ACP] + NAD(+) = a (2E)-enoyl-[ACP] + NADH + H(+). Its pathway is lipid metabolism; fatty acid biosynthesis. In terms of biological role, catalyzes the reduction of a carbon-carbon double bond in an enoyl moiety that is covalently linked to an acyl carrier protein (ACP). Involved in the elongation cycle of fatty acid which are used in the lipid metabolism. The chain is Enoyl-[acyl-carrier-protein] reductase [NADH] FabI (fabI) from Nostoc sp. (strain PCC 7120 / SAG 25.82 / UTEX 2576).